A 199-amino-acid polypeptide reads, in one-letter code: Peptidyl-prolyl cis-trans isomerase CYP22 (199 aa).

In terms of domain architecture, PPIase cyclophilin-type spans 35 to 198; it reads FFDVSIGGIP…LAVVITECGE (164 aa).

This sequence belongs to the cyclophilin-type PPIase family. Ubiquitous.

The catalysed reaction is [protein]-peptidylproline (omega=180) = [protein]-peptidylproline (omega=0). Functionally, PPIases accelerate the folding of proteins. It catalyzes the cis-trans isomerization of proline imidic peptide bonds in oligopeptides. This Arabidopsis thaliana (Mouse-ear cress) protein is Peptidyl-prolyl cis-trans isomerase CYP22 (CYP22).